The following is a 365-amino-acid chain: Peptide chain release factor 1 (365 aa).

The residue at position 242 (glutamine 242) is an N5-methylglutamine.

This sequence belongs to the prokaryotic/mitochondrial release factor family. In terms of processing, methylated by PrmC. Methylation increases the termination efficiency of RF1.

The protein localises to the cytoplasm. Peptide chain release factor 1 directs the termination of translation in response to the peptide chain termination codons UAG and UAA. The chain is Peptide chain release factor 1 from Fusobacterium nucleatum subsp. nucleatum (strain ATCC 25586 / DSM 15643 / BCRC 10681 / CIP 101130 / JCM 8532 / KCTC 2640 / LMG 13131 / VPI 4355).